The chain runs to 230 residues: Rab15 effector protein (230 aa).

G2 is lipidated: N-myristoyl glycine.

In terms of assembly, interacts with the GTP-bound form of RAB15, RAB3A-D and RAB34.

The protein localises to the early endosome membrane. Effector that interacts with Rab GTPases in their active form (GTP-bound) including RAB15, RAB3A-D and RAB34. Controls downstream signaling such as cell proliferation and cell migration. Also regulates transferrin receptor recycling from the endocytic recycling compartment. The polypeptide is Rab15 effector protein (Mus musculus (Mouse)).